Reading from the N-terminus, the 375-residue chain is DNA replication and repair protein RecF (375 aa).

ATP is bound at residue 30–37; sequence GDNAQGKS.

Belongs to the RecF family.

It localises to the cytoplasm. Functionally, the RecF protein is involved in DNA metabolism; it is required for DNA replication and normal SOS inducibility. RecF binds preferentially to single-stranded, linear DNA. It also seems to bind ATP. This Gloeobacter violaceus (strain ATCC 29082 / PCC 7421) protein is DNA replication and repair protein RecF.